The primary structure comprises 147 residues: Large ribosomal subunit protein uL15 (147 aa).

Over residues 1-13 (MKLENLKSKEGSR) the composition is skewed to basic and acidic residues. The disordered stretch occupies residues 1–54 (MKLENLKSKEGSRHKTKRVGRGFGSGIGKTSTRGSKGQKSRKSGHTRPGFEGGQ). Positions 36–45 (KGQKSRKSGH) are enriched in basic residues.

The protein belongs to the universal ribosomal protein uL15 family. Part of the 50S ribosomal subunit.

In terms of biological role, binds to the 23S rRNA. The protein is Large ribosomal subunit protein uL15 of Malacoplasma penetrans (strain HF-2) (Mycoplasma penetrans).